The chain runs to 264 residues: Diphthine synthase (264 aa).

S-adenosyl-L-methionine is bound by residues leucine 9, aspartate 84, valine 87, 112 to 113 (SI), leucine 164, alanine 207, and histidine 232.

Belongs to the diphthine synthase family. In terms of assembly, homodimer.

It catalyses the reaction 2-[(3S)-amino-3-carboxypropyl]-L-histidyl-[translation elongation factor 2] + 3 S-adenosyl-L-methionine = diphthine-[translation elongation factor 2] + 3 S-adenosyl-L-homocysteine + 3 H(+). It participates in protein modification; peptidyl-diphthamide biosynthesis. Functionally, S-adenosyl-L-methionine-dependent methyltransferase that catalyzes the trimethylation of the amino group of the modified target histidine residue in translation elongation factor 2 (EF-2), to form an intermediate called diphthine. The three successive methylation reactions represent the second step of diphthamide biosynthesis. This Methanothermobacter thermautotrophicus (strain ATCC 29096 / DSM 1053 / JCM 10044 / NBRC 100330 / Delta H) (Methanobacterium thermoautotrophicum) protein is Diphthine synthase.